The primary structure comprises 564 residues: Cytochrome c oxidase subunit 1 (564 aa).

The segment at 1 to 23 (MTAVAPRLENYAEPTRPAPTGGA) is disordered. 7 helical membrane-spanning segments follow: residues 43–63 (MMYI…ALLI), 83–103 (LFTL…VWGF), 122–142 (LNAF…AGFL), 171–191 (FWII…VNMI), 214–234 (IFVA…AALG), 259–279 (LFWF…FGIV), and 292–312 (FGYI…MAVW). Residue His-87 participates in Fe(II)-heme a binding. Residues His-265 and Tyr-269 each coordinate Cu cation. Positions 265-269 (HPEVY) form a cross-link, 1'-histidyl-3'-tyrosine (His-Tyr). His-314 and His-315 together coordinate Cu cation. 2 helical membrane passes run 316–336 (MFVT…LISV) and 360–380 (MTWT…GIML). His-398 provides a ligand contact to heme a3. A run of 3 helical transmembrane segments spans residues 399–419 (FHYT…YFWF), 434–454 (IHFW…HWVG), and 477–497 (ISTV…WNVF). His-400 is a binding site for Fe(II)-heme a.

Belongs to the heme-copper respiratory oxidase family. As to quaternary structure, associates with subunits II, III and IV to form cytochrome c oxidase. The cofactor is Cu(2+). It depends on heme as a cofactor.

It is found in the cell membrane. The enzyme catalyses 4 Fe(II)-[cytochrome c] + O2 + 8 H(+)(in) = 4 Fe(III)-[cytochrome c] + 2 H2O + 4 H(+)(out). The protein operates within energy metabolism; oxidative phosphorylation. Its function is as follows. Cytochrome c oxidase is the component of the respiratory chain that catalyzes the reduction of oxygen to water. Subunits 1-3 form the functional core of the enzyme complex. CO I is the catalytic subunit of the enzyme. Electrons originating in cytochrome c are transferred via the copper A center of subunit 2 and heme A of subunit 1 to the bimetallic center formed by heme A3 and copper B. In Corynebacterium diphtheriae (strain ATCC 700971 / NCTC 13129 / Biotype gravis), this protein is Cytochrome c oxidase subunit 1 (ctaD).